The chain runs to 338 residues: Acyl-CoA:acyl-CoA alkyltransferase (338 aa).

2 residues coordinate Mn(2+): histidine 18 and aspartate 56. Catalysis depends on glutamate 97, which acts as the Proton acceptor. Cysteine 123 acts as the Acyl-thioester intermediate in catalysis.

The protein belongs to the thiolase-like superfamily. OleA family. As to quaternary structure, homodimer. Weakly associates with the OleBCD complex.

The protein resides in the cytoplasm. It catalyses the reaction a 1,2-saturated acyl-CoA + an acyl-CoA + H2O = an (R)-2-alkyl-3-oxoalkanoate + 2 CoA + H(+). Inhibited by cerulenin. In terms of biological role, involved in olefin biosynthesis. Catalyzes a non-decarboxylative head-to-head Claisen condensation of two acyl-CoA molecules, generating an (R)-2-alkyl-3-oxoalkanoate. Is active with fatty acyl-CoA substrates that ranged from C(8) to C(16) in length, and is the most active with palmitoyl-CoA and myristoyl-CoA. The protein is Acyl-CoA:acyl-CoA alkyltransferase of Xanthomonas campestris pv. campestris (strain ATCC 33913 / DSM 3586 / NCPPB 528 / LMG 568 / P 25).